The chain runs to 410 residues: Arginine biosynthesis bifunctional protein ArgJ (410 aa).

Residues T160, K186, T197, E283, N405, and T410 each coordinate substrate. The active-site Nucleophile is the T197.

The protein belongs to the ArgJ family. As to quaternary structure, heterotetramer of two alpha and two beta chains.

It is found in the cytoplasm. The catalysed reaction is N(2)-acetyl-L-ornithine + L-glutamate = N-acetyl-L-glutamate + L-ornithine. It carries out the reaction L-glutamate + acetyl-CoA = N-acetyl-L-glutamate + CoA + H(+). It functions in the pathway amino-acid biosynthesis; L-arginine biosynthesis; L-ornithine and N-acetyl-L-glutamate from L-glutamate and N(2)-acetyl-L-ornithine (cyclic): step 1/1. Its pathway is amino-acid biosynthesis; L-arginine biosynthesis; N(2)-acetyl-L-ornithine from L-glutamate: step 1/4. Functionally, catalyzes two activities which are involved in the cyclic version of arginine biosynthesis: the synthesis of N-acetylglutamate from glutamate and acetyl-CoA as the acetyl donor, and of ornithine by transacetylation between N(2)-acetylornithine and glutamate. This chain is Arginine biosynthesis bifunctional protein ArgJ, found in Geobacillus kaustophilus (strain HTA426).